A 549-amino-acid chain; its full sequence is Ceramide kinase 1 (549 aa).

The DAGKc domain maps to 162–316 (NRPKNIIIFI…VDVCTVHQHQ (155 aa)). ATP-binding positions include 172–174 (NPF) and 205–209 (TERAN). 233-236 (GGDG) lines the substrate pocket. The active-site Proton donor/acceptor is D235. ATP is bound by residues E240, 277–279 (GSA), R342, R348, and 500–502 (DGE).

The enzyme catalyses an N-acylsphing-4-enine + ATP = an N-acylsphing-4-enine 1-phosphate + ADP + H(+). The catalysed reaction is an N-acyl-15-methylhexadecasphing-4-enine + ATP = an N-acyl-15-methylhexadecasphing-4-enine-1-phosphate + ADP + H(+). It functions in the pathway lipid metabolism; sphingolipid metabolism. Functionally, catalyzes the phosphorylation of ceramide to form ceramide 1-phosphate. C.elegans contain specific sphingoid bases, which are unique or different in structure compared to the sphingoid bases found in other animals. Two examples of these distinctive compounds are: 15-methylhexadecasphinganine and 15-methylhexadecasphing-4-enine. The chain is Ceramide kinase 1 from Caenorhabditis elegans.